The sequence spans 466 residues: 3-isopropylmalate dehydratase large subunit (466 aa).

[4Fe-4S] cluster contacts are provided by Cys-347, Cys-407, and Cys-410.

It belongs to the aconitase/IPM isomerase family. LeuC type 1 subfamily. Heterodimer of LeuC and LeuD. The cofactor is [4Fe-4S] cluster.

It carries out the reaction (2R,3S)-3-isopropylmalate = (2S)-2-isopropylmalate. It participates in amino-acid biosynthesis; L-leucine biosynthesis; L-leucine from 3-methyl-2-oxobutanoate: step 2/4. In terms of biological role, catalyzes the isomerization between 2-isopropylmalate and 3-isopropylmalate, via the formation of 2-isopropylmaleate. This Shewanella loihica (strain ATCC BAA-1088 / PV-4) protein is 3-isopropylmalate dehydratase large subunit.